Reading from the N-terminus, the 309-residue chain is MQLEFLGTGAGSPSKQRNVASVALRLLEERNAIWLFDVGEATQHQILNTTIRPRKIEKIFITHLHGDHIFGLPGLLSSRSFQGGTEPLTIYGPVGIKRYVQTSLQVSESRLSYPLHFVEITDDGELFNDHGFRVIARKLDHKIACFGYRIEEADHPGELQVEKLREQKVPSGPIYGQLKAGKTVTLPDGRVLDGHDFIGTPQPGRIIAILGDTRQTKNAILLAQNADVLVHESTFAKDETKMAHNYYHSTSKQAAEIAKKAGVKKLLLNHISARYTGKAAYQLAYQVRNIIPDTRVVNDFDVIDIPFKK.

Zn(2+) is bound by residues His63, His65, Asp67, His68, His141, Asp212, and His270. The Proton acceptor role is filled by Asp67.

Belongs to the RNase Z family. In terms of assembly, homodimer. It depends on Zn(2+) as a cofactor.

The enzyme catalyses Endonucleolytic cleavage of RNA, removing extra 3' nucleotides from tRNA precursor, generating 3' termini of tRNAs. A 3'-hydroxy group is left at the tRNA terminus and a 5'-phosphoryl group is left at the trailer molecule.. Zinc phosphodiesterase, which displays some tRNA 3'-processing endonuclease activity. Probably involved in tRNA maturation, by removing a 3'-trailer from precursor tRNA. This chain is Ribonuclease Z, found in Limosilactobacillus reuteri (strain DSM 20016) (Lactobacillus reuteri).